Reading from the N-terminus, the 320-residue chain is ATP-dependent 6-phosphofructokinase isozyme 1 (320 aa).

G12 contacts ATP. ADP is bound by residues 22 to 26 and 55 to 60; these read RGVVR and RYSVSD. Residues 73–74 and 103–106 each bind ATP; these read RF and GDGS. Mg(2+) is bound at residue D104. 126-128 provides a ligand contact to substrate; it reads TID. D128 serves as the catalytic Proton acceptor. Position 155 (R155) interacts with ADP. Substrate-binding positions include R163 and 170–172; that span reads MGR. ADP-binding positions include 186 to 188, K212, and 214 to 216; these read GCE and KKH. Residues E223, R244, and 250 to 253 each bind substrate; that span reads HIQR.

It belongs to the phosphofructokinase type A (PFKA) family. ATP-dependent PFK group I subfamily. Prokaryotic clade 'B1' sub-subfamily. Homotetramer. Mg(2+) is required as a cofactor.

It is found in the cytoplasm. The enzyme catalyses beta-D-fructose 6-phosphate + ATP = beta-D-fructose 1,6-bisphosphate + ADP + H(+). The protein operates within carbohydrate degradation; glycolysis; D-glyceraldehyde 3-phosphate and glycerone phosphate from D-glucose: step 3/4. With respect to regulation, allosterically activated by ADP and other diphosphonucleosides, and allosterically inhibited by phosphoenolpyruvate. Functionally, catalyzes the phosphorylation of D-fructose 6-phosphate to fructose 1,6-bisphosphate by ATP, the first committing step of glycolysis. This is ATP-dependent 6-phosphofructokinase isozyme 1 from Shigella boydii serotype 18 (strain CDC 3083-94 / BS512).